Reading from the N-terminus, the 130-residue chain is ATP synthase epsilon chain, chloroplastic (130 aa).

This sequence belongs to the ATPase epsilon chain family. As to quaternary structure, F-type ATPases have 2 components, CF(1) - the catalytic core - and CF(0) - the membrane proton channel. CF(1) has five subunits: alpha(3), beta(3), gamma(1), delta(1), epsilon(1). CF(0) has three main subunits: a, b and c.

Its subcellular location is the plastid. The protein resides in the chloroplast thylakoid membrane. Produces ATP from ADP in the presence of a proton gradient across the membrane. This is ATP synthase epsilon chain, chloroplastic from Emiliania huxleyi (Coccolithophore).